We begin with the raw amino-acid sequence, 154 residues long: Melatonin receptor type 1A (154 aa).

At 1–19 the chain is on the cytoplasmic side; the sequence is YCYICHSLKYDRWYSNRNS. Residues 20 to 40 form a helical membrane-spanning segment; it reads LCCVFLICVLTLVAIVPNLCM. Topologically, residues 41 to 62 are extracellular; the sequence is GTLQYDPRIYSCTFAQSVSSAY. Residues 63-83 form a helical membrane-spanning segment; sequence TIAVVVFHFLVPMVIVIFRYL. Residues 84 to 115 are Cytoplasmic-facing; sequence RIWVLVLQIRWRAKPENNPRLKPQDFRNFVTM. A helical transmembrane segment spans residues 116 to 136; sequence FVVFVLFAICWAPLNFIGLAV. Residues 137–149 lie on the Extracellular side of the membrane; the sequence is ASDPASMAPRIPE.

The protein belongs to the G-protein coupled receptor 1 family.

The protein resides in the cell membrane. High affinity receptor for melatonin. Likely to mediate the reproductive and circadian actions of melatonin. The activity of this receptor is mediated by pertussis toxin sensitive G proteins that inhibit adenylate cyclase activity. The protein is Melatonin receptor type 1A (MTNR1A) of Sus scrofa (Pig).